A 258-amino-acid chain; its full sequence is Small ribosomal subunit protein uS2 (258 aa).

The interval 227 to 258 (GEQFAPASEQKEEVKTQEVQEVEDSNDDVIDD) is disordered. Over residues 235–244 (EQKEEVKTQE) the composition is skewed to basic and acidic residues. Positions 246 to 258 (QEVEDSNDDVIDD) are enriched in acidic residues.

It belongs to the universal ribosomal protein uS2 family.

The polypeptide is Small ribosomal subunit protein uS2 (Caldicellulosiruptor saccharolyticus (strain ATCC 43494 / DSM 8903 / Tp8T 6331)).